Consider the following 605-residue polypeptide: Protein phosphatase 1D (605 aa).

The tract at residues 1 to 101 (MAGLYSLGVS…CRRRSSVAFF (101 aa)) is interaction with CHEK1. One can recognise a PPM-type phosphatase domain in the interval 8–375 (GVSVFSDQGG…DNTSAIVICI (368 aa)). The disordered stretch occupies residues 28–90 (VVEPEPTAEE…DAGASPAPSR (63 aa)). 2 positions are modified to phosphoserine: serine 40 and serine 85. Mn(2+) contacts are provided by aspartate 105, glycine 106, aspartate 314, and aspartate 366. A disordered region spans residues 516–591 (STPGQMKAQE…RRLRGQKKIG (76 aa)). Polar residues-rich tracts occupy residues 530 to 544 (PPTN…SNSG) and 555 to 577 (LSRS…NSVK). Residues 579–588 (TMRRRLRGQK) show a composition bias toward basic residues.

This sequence belongs to the PP2C family. In terms of assembly, interacts with CHEK1 and CHEK2; dephosphorylates them. Interacts with MAPK14. It depends on Mg(2+) as a cofactor. The cofactor is Mn(2+). As to expression, expressed in fetal and adult brain. Also detected in fetal liver and skeletal muscle, but not in their adult counterparts.

The protein resides in the nucleus. It is found in the cytoplasm. It localises to the cytosol. It catalyses the reaction O-phospho-L-seryl-[protein] + H2O = L-seryl-[protein] + phosphate. The catalysed reaction is O-phospho-L-threonyl-[protein] + H2O = L-threonyl-[protein] + phosphate. Functionally, involved in the negative regulation of p53 expression. Required for the relief of p53-dependent checkpoint mediated cell cycle arrest. Binds to and dephosphorylates 'Ser-15' of TP53 and 'Ser-345' of CHEK1 which contributes to the functional inactivation of these proteins. Mediates MAPK14 dephosphorylation and inactivation. Is also an important regulator of global heterochromatin silencing and critical in maintaining genome integrity. In Homo sapiens (Human), this protein is Protein phosphatase 1D (PPM1D).